Consider the following 326-residue polypeptide: Tetraacyldisaccharide 4'-kinase (326 aa).

An ATP-binding site is contributed by 55–62; sequence TAGGNGKT.

The protein belongs to the LpxK family.

It carries out the reaction a lipid A disaccharide + ATP = a lipid IVA + ADP + H(+). It participates in glycolipid biosynthesis; lipid IV(A) biosynthesis; lipid IV(A) from (3R)-3-hydroxytetradecanoyl-[acyl-carrier-protein] and UDP-N-acetyl-alpha-D-glucosamine: step 6/6. Its function is as follows. Transfers the gamma-phosphate of ATP to the 4'-position of a tetraacyldisaccharide 1-phosphate intermediate (termed DS-1-P) to form tetraacyldisaccharide 1,4'-bis-phosphate (lipid IVA). This Serratia proteamaculans (strain 568) protein is Tetraacyldisaccharide 4'-kinase.